A 373-amino-acid chain; its full sequence is Alpha-N-acetylgalactosaminide alpha-2,6-sialyltransferase 2 (373 aa).

Residues 1–6 (MDLPRR) are Cytoplasmic-facing. The chain crosses the membrane as a helical; Signal-anchor for type II membrane protein span at residues 7–27 (WLFRMLLLVATSSGILLMLYS). Over 28–373 (SAGQQSPETQ…NAGILWLYQR (346 aa)) the chain is Lumenal. Intrachain disulfides connect C65–C147 and C150–C316. N-linked (GlcNAc...) asparagine glycosylation occurs at N103. A CMP-N-acetyl-beta-neuraminate-binding site is contributed by N155. A glycan (N-linked (GlcNAc...) asparagine) is linked at N160. 3 residues coordinate CMP-N-acetyl-beta-neuraminate: N178, S303, and H335.

This sequence belongs to the glycosyltransferase 29 family. In terms of tissue distribution, highly expressed in lactating mammary gland and adult testis. Lower levels in kidney.

It is found in the golgi apparatus membrane. It carries out the reaction a beta-D-galactosyl-(1-&gt;3)-N-acetyl-alpha-D-galactosaminyl derivative + CMP-N-acetyl-beta-neuraminate = a beta-D-galactosyl-(1-&gt;3)-[N-acetyl-alpha-neuraminyl-(2-&gt;6)]-N-acetyl-alpha-D-galactosaminyl derivative + CMP + H(+). The enzyme catalyses a 3-O-[N-acetyl-alpha-D-galactosaminyl]-L-threonyl-[protein] + CMP-N-acetyl-beta-neuraminate = a 3-O-[N-acetyl-alpha-neuraminosyl-(2-&gt;6)-N-acetyl-alpha-D-galactosaminyl]-L-threonyl-[protein] + CMP + H(+). It catalyses the reaction a 3-O-[N-acetyl-alpha-neuraminyl-(2-&gt;3)-beta-D-galactosyl-(1-&gt;3)-N-acetyl-alpha-D-galactosaminyl]-L-threonyl-[protein] + CMP-N-acetyl-beta-neuraminate = a 3-O-{alpha-Neu5Ac-(2-&gt;3)-beta-D-Gal-(1-&gt;3)-[alpha-Neu5Ac-(2-&gt;6)]-alpha-D-GalNAc}-L-threonyl-[protein] + CMP + H(+). It functions in the pathway protein modification; protein glycosylation. Functionally, catalyzes the transfer of N-acetylneuraminyl groups onto glycan chains in glycoproteins. Conjugates sialic acid with an alpha-2-6 linkage to N-acetylgalactosamine (GalNAc) glycan chains linked to serine or threonine in glycoproteins. Sialylates alphaGalNAc- and Galbeta1-&gt;3GalNAc-O-Ser/Thr epitopes also known as Tn and T antigens. In Mus musculus (Mouse), this protein is Alpha-N-acetylgalactosaminide alpha-2,6-sialyltransferase 2 (St6galnac2).